We begin with the raw amino-acid sequence, 152 residues long: SKP1-like protein 8 (152 aa).

The interaction with the F-box domain of F-box proteins stretch occupies residues 94–152; the sequence is TNAANFLNNKSLLHLAGQTVADMIKGNTPKQMREFFNIENDLTPEEEAAIRRENKWAFE.

The protein belongs to the SKP1 family. As to quaternary structure, part of a SCF (SKP1-cullin-F-box) protein ligase complex. Restricted to siliques.

It is found in the nucleus. Its pathway is protein modification; protein ubiquitination. Functionally, involved in ubiquitination and subsequent proteasomal degradation of target proteins. Together with CUL1, RBX1 and a F-box protein, it forms a SCF E3 ubiquitin ligase complex. The functional specificity of this complex depends on the type of F-box protein. In the SCF complex, it serves as an adapter that links the F-box protein to CUL1. This Arabidopsis thaliana (Mouse-ear cress) protein is SKP1-like protein 8 (ASK8).